The chain runs to 283 residues: 2-dehydro-3-deoxyphosphooctonate aldolase (283 aa).

Belongs to the KdsA family.

The protein localises to the cytoplasm. It catalyses the reaction D-arabinose 5-phosphate + phosphoenolpyruvate + H2O = 3-deoxy-alpha-D-manno-2-octulosonate-8-phosphate + phosphate. The protein operates within carbohydrate biosynthesis; 3-deoxy-D-manno-octulosonate biosynthesis; 3-deoxy-D-manno-octulosonate from D-ribulose 5-phosphate: step 2/3. It participates in bacterial outer membrane biogenesis; lipopolysaccharide biosynthesis. In Laribacter hongkongensis (strain HLHK9), this protein is 2-dehydro-3-deoxyphosphooctonate aldolase.